The chain runs to 478 residues: F-box/kelch-repeat protein At1g51550 (478 aa).

Residues 1–20 form a disordered region; sequence MAAESTRNSSPPSTSQSSSP. Low complexity predominate over residues 9-20; that stretch reads SSPPSTSQSSSP. Positions 18–64 constitute an F-box domain; that stretch reads SSPIINLPDDHLLTILLLLPVDSILSFSMTCKRYKSLACSDSLWEAL. 2 Kelch repeats span residues 135–187 and 246–299; these read LVLF…VIGE and KMVV…CIRE.

The sequence is that of F-box/kelch-repeat protein At1g51550 from Arabidopsis thaliana (Mouse-ear cress).